The sequence spans 713 residues: MSLFNKIVKEFQWGQQKVRLETGEIARQASGAVIVDIEDTVVLATVVGAKSAKPGQDFFPLTVDYIEKTYSAGKIPGGFFRREGRPSEHETLTSRLIDRPLRPLFPEGFYNEVQVVIHVLSVNPEIPADIPALIGASAALAVSGLPFNGPVGAARVAYVNNEYVLNPTREQIKASRLDLVVAGTERAVLMVESEADQLPEDVMLGAVVFGHEQMQTAIDAIHELVREGGKPEWDWQPAPKDEALNARVTELAQPELLAAYQIRDKQARLTKLKEVYAATSAKLEEEAVAAGTVAADKATVGNILFDLEAKIVRGQILNGEPRIDGRDTRTVRPIEIRTGVLPRTHGSALFTRGETQALVVATLGTKGDEQIIDALEGEYRERFMLHYNMPPFATGETGRVGSPKRREIGHGRLAKRALVACLPSADEFGYSIRVVSEITESNGSSSMASVCGGCLALMDAGVPMKAHVAGIAMGLILEGNKFAVLTDILGDEDHLGDMDFKVAGTADGVTALQMDIKIQGITKEIMQVALAQAKEGRMHILGKMKDAVAGANTQLSEFAPRMITIKINPEKIRDVIGKGGSVIRALTEETGTTIDISDDGVVTIASTNSEGMAEAKKRIENITAEIEVGHVYEGTVLKLLDFGAIVNLLPGKDGLLHISEIVNERVKDINDYLKEGQQVKVKVIQTDEKGRVRLSAKALLNEAAAQADTPPQQ.

Residues D493 and D499 each coordinate Mg(2+). The KH domain occupies 560–619 (PRMITIKINPEKIRDVIGKGGSVIRALTEETGTTIDISDDGVVTIASTNSEGMAEAKKRI). Residues 629–697 (GHVYEGTVLK…EKGRVRLSAK (69 aa)) enclose the S1 motif domain.

Belongs to the polyribonucleotide nucleotidyltransferase family. Mg(2+) is required as a cofactor.

It is found in the cytoplasm. It carries out the reaction RNA(n+1) + phosphate = RNA(n) + a ribonucleoside 5'-diphosphate. Its function is as follows. Involved in mRNA degradation. Catalyzes the phosphorolysis of single-stranded polyribonucleotides processively in the 3'- to 5'-direction. The chain is Polyribonucleotide nucleotidyltransferase from Burkholderia mallei (strain NCTC 10247).